A 237-amino-acid chain; its full sequence is N-alpha-acetyltransferase 40 (237 aa).

Glycine 2 carries N-myristoyl glycine lipidation. In terms of domain architecture, N-acetyltransferase spans 63-216; it reads SGLEPATVDW…EDCSYEILSR (154 aa). Substrate-binding positions include tyrosine 85, 127–129, and tyrosine 138; that span reads DVE. Acetyl-CoA contacts are provided by residues 140-142 and 148-153; these read VQL and RKGLGK. Threonine 174 is a substrate binding site. Asparagine 179 contributes to the acetyl-CoA binding site. Substrate is bound by residues serine 197 and tyrosine 211.

It belongs to the acetyltransferase family. NAA40 subfamily.

Its subcellular location is the cytoplasm. It is found in the nucleus. The enzyme catalyses N-terminal L-seryl-[histone H4] + acetyl-CoA = N-terminal N(alpha)-acetyl-L-seryl-[histone H4] + CoA + H(+). The catalysed reaction is N-terminal L-seryl-[histone H2A] + acetyl-CoA = N-terminal N(alpha)-acetyl-L-seryl-[histone H2A] + CoA + H(+). N-alpha-acetyltransferase that specifically mediates the acetylation of the N-terminal residues of histones H4 and H2A. In contrast to other N-alpha-acetyltransferase, has a very specific selectivity for histones H4 and H2A N-terminus and specifically recognizes the 'Ser-Gly-Arg-Gly sequence'. Acts as a negative regulator of apoptosis. May play a role in hepatic lipid metabolism. In Mus musculus (Mouse), this protein is N-alpha-acetyltransferase 40.